Consider the following 187-residue polypeptide: Nodulin-related protein 1 (187 aa).

Met-1 carries the N-acetylmethionine modification. Disordered regions lie at residues Met-1 to Ala-66 and Tyr-132 to Gly-176. Over residues Gln-7 to Thr-48 the composition is skewed to basic and acidic residues. Residues Gly-142–Gly-158 show a composition bias toward gly residues.

Interacts with RPS2. In terms of tissue distribution, expressed in roots, leaves, flowers and siliques.

Functionally, prevents accumulation of abscisic acid (ABA) after heat treatment, thus reducing thermotolerance. May be a negative regulator of the ABA signaling/synthesis pathway. Required for defense responses against avirulent bacteria such as P.syringae pv. tomato DC3000 (avrRpt2). This chain is Nodulin-related protein 1, found in Arabidopsis thaliana (Mouse-ear cress).